The primary structure comprises 454 residues: UPF0210 protein Blon_2054/BLIJ_2131 (454 aa).

The protein belongs to the UPF0210 family. Homodimer.

The protein is UPF0210 protein Blon_2054/BLIJ_2131 of Bifidobacterium longum subsp. infantis (strain ATCC 15697 / DSM 20088 / JCM 1222 / NCTC 11817 / S12).